The following is a 105-amino-acid chain: UPF0060 membrane protein Reut_B3679 (105 aa).

A run of 4 helical transmembrane segments spans residues 4–24, 28–48, 60–80, and 82–102; these read IALYLLTAVAEILGCYLPYLW, GASAWVLLPGALSLALFAWLL, AAYGGVYIGVAVLWLWLVDGV, and PSAWDLAGVGVAFGGMAIIVF.

This sequence belongs to the UPF0060 family.

It localises to the cell inner membrane. The chain is UPF0060 membrane protein Reut_B3679 from Cupriavidus pinatubonensis (strain JMP 134 / LMG 1197) (Cupriavidus necator (strain JMP 134)).